The following is a 513-amino-acid chain: MAAAIAVVYLSLLLLLLHGAAPAVLGYTRGDFPEDFVFGSATSSYQYEGGFDEDGRSPSNWDIFTHQGKMPGRSTADVAADGYHKYKDDLKLMVDTNLEAYRLSISWSRIIPNGRGDVNPKGLQYYNDIIDGLVKNGIQVHIMLYQLDLPQVLEDEYDGWLSPRILEDFKAYADVCFKEFGDRVAHWITIDEPNVASIGSYDSGQLAPGRCSDPFGIRKCTVGNSSVEPYIAVHNMLLAHASVTKLYREKYQVAGKGIIGISVYTFWAYPLTNSTVDLEATKRCQDFIVHWVLRPLVFGDYPQVMKNIVGSRLPSFTKAQSEDVKGSLDFIGMNHYYSLYVNDRPLGKGTRDFVADISIYYRGSKTDPPPGKAAPTSIGPDPQGLRLMVQYLQETYGNLPIYILENGYGSSNDTVHDNDRVDYLKSYIGSILTALRNGANVKGYFVWSFVDVFEYLTGYGQSYGLYRVDFADESRPRQARLSARWYSGFLKNREMDVDQSELAMAAAESRAQQ.

An N-terminal signal peptide occupies residues 1–26 (MAAAIAVVYLSLLLLLLHGAAPAVLG). Position 46 (Gln46) interacts with a beta-D-glucoside. Residue Glu192 is the Proton donor of the active site. A disulfide bridge connects residues Cys211 and Cys220. N-linked (GlcNAc...) asparagine glycans are attached at residues Asn224 and Asn273. A beta-D-glucoside is bound by residues Tyr336 and Glu405. The active-site Nucleophile is the Glu405. Asn412 is a glycosylation site (N-linked (GlcNAc...) asparagine). A beta-D-glucoside contacts are provided by residues Trp447, 454 to 455 (EY), and Tyr463.

This sequence belongs to the glycosyl hydrolase 1 family.

It carries out the reaction Hydrolysis of terminal, non-reducing beta-D-glucosyl residues with release of beta-D-glucose.. The chain is Beta-glucosidase 5 (BGLU5) from Oryza sativa subsp. japonica (Rice).